A 297-amino-acid polypeptide reads, in one-letter code: Pyridoxal 5'-phosphate synthase subunit PdxS (297 aa).

Asp-27 is a binding site for D-ribose 5-phosphate. Lys-84 (schiff-base intermediate with D-ribose 5-phosphate) is an active-site residue. Position 156 (Gly-156) interacts with D-ribose 5-phosphate. Arg-168 lines the D-glyceraldehyde 3-phosphate pocket. D-ribose 5-phosphate contacts are provided by residues Gly-217 and 238–239 (GS).

This sequence belongs to the PdxS/SNZ family. As to quaternary structure, in the presence of PdxT, forms a dodecamer of heterodimers.

The catalysed reaction is aldehydo-D-ribose 5-phosphate + D-glyceraldehyde 3-phosphate + L-glutamine = pyridoxal 5'-phosphate + L-glutamate + phosphate + 3 H2O + H(+). It functions in the pathway cofactor biosynthesis; pyridoxal 5'-phosphate biosynthesis. Functionally, catalyzes the formation of pyridoxal 5'-phosphate from ribose 5-phosphate (RBP), glyceraldehyde 3-phosphate (G3P) and ammonia. The ammonia is provided by the PdxT subunit. Can also use ribulose 5-phosphate and dihydroxyacetone phosphate as substrates, resulting from enzyme-catalyzed isomerization of RBP and G3P, respectively. This is Pyridoxal 5'-phosphate synthase subunit PdxS from Corynebacterium efficiens (strain DSM 44549 / YS-314 / AJ 12310 / JCM 11189 / NBRC 100395).